The primary structure comprises 164 residues: Transcription elongation factor GreA (164 aa).

A coiled-coil region spans residues 50 to 76 (YHAAREEQGQQEARIRQLQELLNNAKV).

It belongs to the GreA/GreB family.

Functionally, necessary for efficient RNA polymerase transcription elongation past template-encoded arresting sites. The arresting sites in DNA have the property of trapping a certain fraction of elongating RNA polymerases that pass through, resulting in locked ternary complexes. Cleavage of the nascent transcript by cleavage factors such as GreA or GreB allows the resumption of elongation from the new 3'terminus. GreA releases sequences of 2 to 3 nucleotides. In Mycobacteroides abscessus (strain ATCC 19977 / DSM 44196 / CCUG 20993 / CIP 104536 / JCM 13569 / NCTC 13031 / TMC 1543 / L948) (Mycobacterium abscessus), this protein is Transcription elongation factor GreA.